Reading from the N-terminus, the 157-residue chain is Vesicle transport protein SFT2B (157 aa).

Met1 bears the N-acetylmethionine mark. The Cytoplasmic portion of the chain corresponds to 1-36 (MDKLKKVLSGQDTEDRSGLSEVVESSSLSWSTRIKG). Residue Ser9 is modified to Phosphoserine. Residues 37–57 (FIVCFALGILCSLLGTLLLWV) traverse the membrane as a helical segment. Residues 58-61 (SRKG) are Lumenal-facing. The helical transmembrane segment at 62–82 (LFAVFYTLGNITSIGSTMFLM) threads the bilayer. Residues 83–96 (GPLKQLKRMFEPTR) lie on the Cytoplasmic side of the membrane. A helical membrane pass occupies residues 97 to 117 (LIATILVLLFFVLTLCSAFLW). Topologically, residues 118 to 120 (NKG) are lumenal. A helical membrane pass occupies residues 121-141 (LALIFCILQSLALTWYSLSYI). The Cytoplasmic segment spans residues 142 to 157 (PYARDAVKKCFAVCLT).

Belongs to the SFT2 family.

Its subcellular location is the membrane. Its function is as follows. May be involved in fusion of retrograde transport vesicles derived from an endocytic compartment with the Golgi complex. This Rattus norvegicus (Rat) protein is Vesicle transport protein SFT2B.